The sequence spans 239 residues: Carboxy-S-adenosyl-L-methionine synthase (239 aa).

Residues Y35, 64–66, 114–115, N129, and R196 each bind S-adenosyl-L-methionine; these read GSS and DL.

The protein belongs to the class I-like SAM-binding methyltransferase superfamily. Cx-SAM synthase family. As to quaternary structure, homodimer.

The enzyme catalyses prephenate + S-adenosyl-L-methionine = carboxy-S-adenosyl-L-methionine + 3-phenylpyruvate + H2O. Its function is as follows. Catalyzes the conversion of S-adenosyl-L-methionine (SAM) to carboxy-S-adenosyl-L-methionine (Cx-SAM). In Helicobacter hepaticus (strain ATCC 51449 / 3B1), this protein is Carboxy-S-adenosyl-L-methionine synthase.